The chain runs to 174 residues: Shikimate kinase 2 (174 aa).

Residue 12–17 participates in ATP binding; sequence GCGKTT. T16 and D32 together coordinate Mg(2+). Substrate is bound by residues D34, R58, and G79. The tract at residues 112–126 is LID domain; that stretch reads EAYPLADQRPTLTGR. ATP is bound at residue R120. R139 is a binding site for substrate. Q155 provides a ligand contact to ATP.

This sequence belongs to the shikimate kinase family. AroL subfamily. In terms of assembly, monomer. It depends on Mg(2+) as a cofactor.

The protein resides in the cytoplasm. The catalysed reaction is shikimate + ATP = 3-phosphoshikimate + ADP + H(+). The protein operates within metabolic intermediate biosynthesis; chorismate biosynthesis; chorismate from D-erythrose 4-phosphate and phosphoenolpyruvate: step 5/7. In terms of biological role, catalyzes the specific phosphorylation of the 3-hydroxyl group of shikimic acid using ATP as a cosubstrate. The sequence is that of Shikimate kinase 2 from Erwinia tasmaniensis (strain DSM 17950 / CFBP 7177 / CIP 109463 / NCPPB 4357 / Et1/99).